The chain runs to 477 residues: Transmembrane and coiled-coil domain protein 3 (477 aa).

Serine 46 carries the post-translational modification Phosphoserine. Residues 112–153 are a coiled coil; the sequence is KQVFEKKNQKSAHSIAQLQKKLEQYHRKLREIEQNGASRSSK. Disordered stretches follow at residues 168–188 and 249–277; these read KDAH…KSGM and PKYG…GAGG. Serine 253 bears the Phosphoserine mark. Polar residues predominate over residues 258–273; sequence SSGTSGSADSNGNQSF. Residues 282 to 398 adopt a coiled-coil conformation; that stretch reads DSQGKLAVIL…KLELHQQEQQ (117 aa). The next 2 helical transmembrane spans lie at 417–437 and 450–470; these read VILA…KFVS and FFAV…LCAI.

This sequence belongs to the TEX28 family. As to quaternary structure, may form homodimers and heterodimers with TMCC2 or TMCC3 via the coiled-coil domains. Interacts with ribosomal proteins RPL4 and RPS6. As to expression, widely expressed, with highest levels in brain, spinal cord and testis.

It is found in the endoplasmic reticulum membrane. The protein is Transmembrane and coiled-coil domain protein 3 of Homo sapiens (Human).